The following is a 300-amino-acid chain: Dihydroorotate dehydrogenase B (NAD(+)), catalytic subunit (300 aa).

FMN is bound by residues S21 and 45–46 (KS). Residues K45, 69–73 (NAVGL), and N125 contribute to the substrate site. Residue N125 participates in FMN binding. C128 serves as the catalytic Nucleophile. FMN is bound by residues K163 and I187. Residue 188–189 (NT) coordinates substrate. Residues G213, 239-240 (GG), and 261-262 (GT) contribute to the FMN site.

It belongs to the dihydroorotate dehydrogenase family. Type 1 subfamily. As to quaternary structure, heterotetramer of 2 PyrK and 2 PyrD type B subunits. It depends on FMN as a cofactor.

The protein localises to the cytoplasm. The catalysed reaction is (S)-dihydroorotate + NAD(+) = orotate + NADH + H(+). The protein operates within pyrimidine metabolism; UMP biosynthesis via de novo pathway; orotate from (S)-dihydroorotate (NAD(+) route): step 1/1. Its function is as follows. Catalyzes the conversion of dihydroorotate to orotate with NAD(+) as electron acceptor. This is Dihydroorotate dehydrogenase B (NAD(+)), catalytic subunit (pyrD) from Thermoplasma acidophilum (strain ATCC 25905 / DSM 1728 / JCM 9062 / NBRC 15155 / AMRC-C165).